The following is a 117-amino-acid chain: Large ribosomal subunit protein bL19 (117 aa).

This sequence belongs to the bacterial ribosomal protein bL19 family.

This protein is located at the 30S-50S ribosomal subunit interface and may play a role in the structure and function of the aminoacyl-tRNA binding site. In Azobacteroides pseudotrichonymphae genomovar. CFP2, this protein is Large ribosomal subunit protein bL19.